The sequence spans 145 residues: uncharacterized protein (145 aa).

Residues Met-1–Phe-59 are disordered.

This is an uncharacterized protein from Caenorhabditis elegans.